A 348-amino-acid polypeptide reads, in one-letter code: Dihydroorotase (348 aa).

The Zn(2+) site is built by H17 and H19. Residues 19 to 21 (HLR) and N45 each bind substrate. Positions 103, 140, and 178 each coordinate Zn(2+). K103 carries the post-translational modification N6-carboxylysine. Position 140 (H140) interacts with substrate. L223 lines the substrate pocket. Position 251 (D251) interacts with Zn(2+). Residue D251 is part of the active site. Residues H255 and A267 each contribute to the substrate site.

This sequence belongs to the metallo-dependent hydrolases superfamily. DHOase family. Class II DHOase subfamily. Homodimer. It depends on Zn(2+) as a cofactor.

It catalyses the reaction (S)-dihydroorotate + H2O = N-carbamoyl-L-aspartate + H(+). It participates in pyrimidine metabolism; UMP biosynthesis via de novo pathway; (S)-dihydroorotate from bicarbonate: step 3/3. Its function is as follows. Catalyzes the reversible cyclization of carbamoyl aspartate to dihydroorotate. This chain is Dihydroorotase, found in Cronobacter sakazakii (strain ATCC BAA-894) (Enterobacter sakazakii).